We begin with the raw amino-acid sequence, 313 residues long: Protoheme IX farnesyltransferase (313 aa).

9 helical membrane passes run 35–55 (LVVF…HPVL), 56–76 (AATS…LNMW), 98–118 (VSSP…VATL), 120–140 (VLVN…YAVV), 153–173 (IVIG…AATG), 180–200 (IILF…LALF), 226–246 (ILLY…LGYF), 248–268 (AAYG…AFNV), and 292–312 (LFLL…AAMI).

It belongs to the UbiA prenyltransferase family. Protoheme IX farnesyltransferase subfamily.

It localises to the cell inner membrane. The catalysed reaction is heme b + (2E,6E)-farnesyl diphosphate + H2O = Fe(II)-heme o + diphosphate. Its pathway is porphyrin-containing compound metabolism; heme O biosynthesis; heme O from protoheme: step 1/1. In terms of biological role, converts heme B (protoheme IX) to heme O by substitution of the vinyl group on carbon 2 of heme B porphyrin ring with a hydroxyethyl farnesyl side group. The chain is Protoheme IX farnesyltransferase from Afipia carboxidovorans (strain ATCC 49405 / DSM 1227 / KCTC 32145 / OM5) (Oligotropha carboxidovorans).